Consider the following 89-residue polypeptide: Acyl-CoA-binding protein (89 aa).

Residues Leu-3 to Ser-88 enclose the ACB domain. An acyl-CoA is bound by residues Tyr-30 to Lys-34, Lys-56, and Tyr-75.

This sequence belongs to the ACBP family.

Functionally, binds medium- and long-chain acyl-CoA esters with very high affinity and may function as an intracellular carrier of acyl-CoA esters. The polypeptide is Acyl-CoA-binding protein (Gossypium hirsutum (Upland cotton)).